The primary structure comprises 188 residues: ATP synthase subunit p18, mitochondrial (188 aa).

Residues 1-18 constitute a mitochondrion transit peptide; the sequence is MMRRVYSPVFCSVAAARF. PPR repeat units follow at residues 36 to 70, 75 to 109, and 116 to 146; these read TNTA…PPDI, ATLQ…EMQH, and NEES…METE.

F-type ATPases have 2 components, F(1) - the catalytic core - and F(o) - the membrane proton channel. F(1) has five subunits: alpha(3), beta(3), gamma(1), delta(1), epsilon(1), plus the additional subunit P18 (Tb427.05.1710) that is not present in F(1)F(o) ATP synthase from metazoa. Subunit P18 (Tb927.5.1710) interacts with the alpha subunit with a 1:1 stoichiometry; the interaction is direct. Subunit gamma is part of the central stalk. F(o) has three main subunits: a, b and c. The trypanosomal ATPase complex contains additional subunits that are not present in the F(1)F(o) ATP synthase from metazoa.

It is found in the mitochondrion. The protein localises to the mitochondrion inner membrane. Mitochondrial membrane ATP synthase (F(1)F(o) ATP synthase) produces ATP from ADP in the presence of a proton gradient across the membrane which is generated by electron transport complexes of the respiratory chain. F-type ATPases consist of two structural domains, F(1) - containing the extramembraneous catalytic core, and F(o) - containing the membrane proton channel, linked together by a central stalk and a peripheral stalk. During catalysis, ATP synthesis in the catalytic domain of F(1) is coupled via a rotary mechanism of the central stalk subunits to proton translocation. Subunits alpha and beta form the catalytic core in F(1). Rotation of the central stalk against the surrounding alpha(3)beta(3) subunits leads to hydrolysis of ATP in three separate catalytic sites on the beta subunits. Contrary to the procyclic, insect form that requires F(1)F(o) ATP synthase for ATP synthesis, the bloodstream form relies on ATP hydrolysis by F(1)F(o) ATP synthase to maintain its mitochondrial membrane potential. In Trypanosoma brucei brucei, this protein is ATP synthase subunit p18, mitochondrial.